We begin with the raw amino-acid sequence, 34 residues long: Photosystem I reaction center subunit XII (34 aa).

Residues 5–25 form a helical membrane-spanning segment; it reads ISSPEIFIALVVAAHAAILAL.

This sequence belongs to the PsaM family.

The protein localises to the cellular thylakoid membrane. In Synechococcus sp. (strain CC9902), this protein is Photosystem I reaction center subunit XII.